Reading from the N-terminus, the 201-residue chain is Dephospho-CoA kinase (201 aa).

The 198-residue stretch at 4–201 (IIGITGGIAS…LEGGRQDDRD (198 aa)) folds into the DPCK domain. ATP is bound at residue 12 to 17 (ASGKST).

It belongs to the CoaE family.

It localises to the cytoplasm. The enzyme catalyses 3'-dephospho-CoA + ATP = ADP + CoA + H(+). It functions in the pathway cofactor biosynthesis; coenzyme A biosynthesis; CoA from (R)-pantothenate: step 5/5. Catalyzes the phosphorylation of the 3'-hydroxyl group of dephosphocoenzyme A to form coenzyme A. The polypeptide is Dephospho-CoA kinase (Streptococcus pneumoniae serotype 4 (strain ATCC BAA-334 / TIGR4)).